We begin with the raw amino-acid sequence, 191 residues long: dCTP deaminase, dUMP-forming (191 aa).

Residues 101–106 (KSSLGR), Asp119, 127–129 (TLE), Gln148, Tyr162, and Gln174 each bind dCTP. Glu129 (proton donor/acceptor) is an active-site residue. Residues 163-191 (GSAKYGSRYQGQRGPTPSRSYQNFHRTPI) form a disordered region. Positions 171–191 (YQGQRGPTPSRSYQNFHRTPI) are enriched in polar residues.

The protein belongs to the dCTP deaminase family. Homotrimer.

It carries out the reaction dCTP + 2 H2O = dUMP + NH4(+) + diphosphate. The protein operates within pyrimidine metabolism; dUMP biosynthesis; dUMP from dCTP: step 1/1. Its function is as follows. Bifunctional enzyme that catalyzes both the deamination of dCTP to dUTP and the hydrolysis of dUTP to dUMP without releasing the toxic dUTP intermediate. The chain is dCTP deaminase, dUMP-forming from Nocardioides sp. (strain ATCC BAA-499 / JS614).